A 335-amino-acid chain; its full sequence is Serpentine receptor class alpha-25 (335 aa).

5 helical membrane-spanning segments follow: residues 22-42 (IPVK…FYFA), 151-171 (LLII…YGVP), 195-215 (FRTV…YLSV), 245-265 (CILI…VNYI), and 280-300 (LAPF…VIYF).

This sequence belongs to the nematode receptor-like protein sra family.

The protein resides in the membrane. The sequence is that of Serpentine receptor class alpha-25 (sra-25) from Caenorhabditis elegans.